Reading from the N-terminus, the 675-residue chain is Potassium-transporting ATPase ATP-binding subunit (675 aa).

Helical transmembrane passes span 34–54, 65–85, 216–236, and 245–265; these read IMFV…FPDI, LITI…SEAF, IALF…IVTL, and LILP…TTIG. Asp304 acts as the 4-aspartylphosphate intermediate in catalysis. Residues Asp341, Glu345, 372–379, and Lys390 contribute to the ATP site; that span reads FTAETRMS. Mg(2+)-binding residues include Asp513 and Asp517. Transmembrane regions (helical) follow at residues 569–591, 611–631, and 644–664; these read ALTT…ALMM, AIIS…PIAM, and IFIN…FLGI.

This sequence belongs to the cation transport ATPase (P-type) (TC 3.A.3) family. Type IA subfamily. In terms of assembly, the system is composed of three essential subunits: KdpA, KdpB and KdpC.

The protein resides in the cell membrane. It catalyses the reaction K(+)(out) + ATP + H2O = K(+)(in) + ADP + phosphate + H(+). In terms of biological role, part of the high-affinity ATP-driven potassium transport (or Kdp) system, which catalyzes the hydrolysis of ATP coupled with the electrogenic transport of potassium into the cytoplasm. This subunit is responsible for energy coupling to the transport system and for the release of the potassium ions to the cytoplasm. This is Potassium-transporting ATPase ATP-binding subunit from Staphylococcus aureus (strain Newman).